The chain runs to 72 residues: MNLGLAIFLIIIALLVGAVAGFYGARAYMKKYFKENPPISEDMIVAMMSQMGQKPSNKKVHQVMNMMKHQQK.

Residues 3–23 traverse the membrane as a helical segment; it reads LGLAIFLIIIALLVGAVAGFY.

The protein belongs to the UPF0154 family.

The protein resides in the cell membrane. The chain is UPF0154 protein lhv_1362 from Lactobacillus helveticus (strain DPC 4571).